Reading from the N-terminus, the 272-residue chain is Imidazole glycerol phosphate synthase subunit HisF (272 aa).

Residues Asp-11 and Asp-130 contribute to the active site.

This sequence belongs to the HisA/HisF family. In terms of assembly, heterodimer of HisH and HisF.

The protein localises to the cytoplasm. The catalysed reaction is 5-[(5-phospho-1-deoxy-D-ribulos-1-ylimino)methylamino]-1-(5-phospho-beta-D-ribosyl)imidazole-4-carboxamide + L-glutamine = D-erythro-1-(imidazol-4-yl)glycerol 3-phosphate + 5-amino-1-(5-phospho-beta-D-ribosyl)imidazole-4-carboxamide + L-glutamate + H(+). It functions in the pathway amino-acid biosynthesis; L-histidine biosynthesis; L-histidine from 5-phospho-alpha-D-ribose 1-diphosphate: step 5/9. Its function is as follows. IGPS catalyzes the conversion of PRFAR and glutamine to IGP, AICAR and glutamate. The HisF subunit catalyzes the cyclization activity that produces IGP and AICAR from PRFAR using the ammonia provided by the HisH subunit. The polypeptide is Imidazole glycerol phosphate synthase subunit HisF (Methanococcus maripaludis (strain C5 / ATCC BAA-1333)).